We begin with the raw amino-acid sequence, 516 residues long: Squalene epoxidase 4 (516 aa).

Transmembrane regions (helical) follow at residues 2-22 (TYAW…FHLI) and 43-63 (ATDV…YALA). Residues 53–54 (VA), 73–74 (ER), Arg-81, Arg-153, Val-169, Asp-335, and Met-348 contribute to the FAD site. Residues 435 to 455 (ILGGMNPHPLTLVLHLVAITL) traverse the membrane as a helical segment.

Belongs to the squalene monooxygenase family. The cofactor is FAD. In terms of tissue distribution, expressed mainly in seedlings and inflorescences.

The protein resides in the membrane. It carries out the reaction squalene + reduced [NADPH--hemoprotein reductase] + O2 = (S)-2,3-epoxysqualene + oxidized [NADPH--hemoprotein reductase] + H2O + H(+). The protein operates within terpene metabolism; lanosterol biosynthesis; lanosterol from farnesyl diphosphate: step 2/3. Catalyzes the stereospecific oxidation of squalene to (S)-2,3-epoxysqualene, and is considered to be a rate-limiting enzyme in steroid biosynthesis. The protein is Squalene epoxidase 4 (SQE4) of Arabidopsis thaliana (Mouse-ear cress).